An 841-amino-acid chain; its full sequence is Taste receptor type 1 member 1 (841 aa).

Residues 1–20 (MLLCTARLVGLQLLISCCWA) form the signal peptide. Residues 21–567 (FACHSTESSP…VFLALREHTS (547 aa)) are Extracellular-facing. N-linked (GlcNAc...) asparagine glycosylation is found at asparagine 87, asparagine 88, asparagine 95, asparagine 291, asparagine 479, and asparagine 529. Residues 568–588 (WVLLAANTLLLLLLLGTAGLF) traverse the membrane as a helical segment. Over 589 to 603 (AWHLDTPVVRSAGGR) the chain is Cytoplasmic. A helical transmembrane segment spans residues 604–624 (LCFLMLGSLAAGSGSLYGFFG). The Extracellular segment spans residues 625 to 639 (EPTRPACLLRQALFA). Residues 640-660 (LGFTIFLSCLTVRSFQLIIIF) form a helical membrane-spanning segment. At 661-680 (KFSTKVPTFYHAWVQNHGAG) the chain is on the cytoplasmic side. A helical membrane pass occupies residues 681 to 701 (LFVMISSAAQLLICLTWLVVW). The Extracellular segment spans residues 702 to 725 (TPLPAREYQRFPHLVMLECTETNS). The helical transmembrane segment at 726-746 (LGFILAFLYNGLLSISAFACS) threads the bilayer. Residues 747 to 761 (YLGKDLPENYNEAKC) are Cytoplasmic-facing. A helical transmembrane segment spans residues 762–782 (VTFSLLFNFVSWIAFFTTASV). The Extracellular portion of the chain corresponds to 783-795 (YDGKYLPAANMMA). The helical transmembrane segment at 796 to 816 (GLSSLSSGFGGYFLPKCYVIL) threads the bilayer. The Cytoplasmic segment spans residues 817–841 (CRPDLNSTEHFQASIQDYTRRCGST).

The protein belongs to the G-protein coupled receptor 3 family. TAS1R subfamily. As to quaternary structure, forms heterodimers with TAS1R3.

The protein resides in the cell membrane. In terms of biological role, putative taste receptor. TAS1R1/TAS1R3 responds to the umami taste stimulus (the taste of monosodium glutamate). Sequence differences within and between species can significantly influence the selectivity and specificity of taste responses. The chain is Taste receptor type 1 member 1 (TAS1R1) from Homo sapiens (Human).